The following is a 427-amino-acid chain: Dihydroorotase (427 aa).

Zn(2+) is bound by residues histidine 60 and histidine 62. Substrate contacts are provided by residues 62-64 (HFR) and asparagine 94. Zn(2+)-binding residues include aspartate 152, histidine 179, and histidine 232. Asparagine 278 is a binding site for substrate. Position 305 (aspartate 305) interacts with Zn(2+). Aspartate 305 is an active-site residue. Residues histidine 309 and 323–324 (FG) contribute to the substrate site.

This sequence belongs to the metallo-dependent hydrolases superfamily. DHOase family. Class I DHOase subfamily. Requires Zn(2+) as cofactor.

It catalyses the reaction (S)-dihydroorotate + H2O = N-carbamoyl-L-aspartate + H(+). The protein operates within pyrimidine metabolism; UMP biosynthesis via de novo pathway; (S)-dihydroorotate from bicarbonate: step 3/3. Functionally, catalyzes the reversible cyclization of carbamoyl aspartate to dihydroorotate. The protein is Dihydroorotase of Enterococcus faecalis (strain ATCC 700802 / V583).